A 125-amino-acid polypeptide reads, in one-letter code: Small ribosomal subunit protein uS13 (125 aa).

The protein belongs to the universal ribosomal protein uS13 family. As to quaternary structure, part of the 30S ribosomal subunit. Forms a loose heterodimer with protein S19. Forms two bridges to the 50S subunit in the 70S ribosome.

Functionally, located at the top of the head of the 30S subunit, it contacts several helices of the 16S rRNA. In the 70S ribosome it contacts the 23S rRNA (bridge B1a) and protein L5 of the 50S subunit (bridge B1b), connecting the 2 subunits; these bridges are implicated in subunit movement. Contacts the tRNAs in the A and P-sites. The polypeptide is Small ribosomal subunit protein uS13 (Rickettsia felis (strain ATCC VR-1525 / URRWXCal2) (Rickettsia azadi)).